The primary structure comprises 294 residues: Formamidopyrimidine-DNA glycosylase (294 aa).

Pro2 serves as the catalytic Schiff-base intermediate with DNA. Glu3 functions as the Proton donor in the catalytic mechanism. The active-site Proton donor; for beta-elimination activity is Lys58. 3 residues coordinate DNA: His105, Arg124, and Lys167. An FPG-type zinc finger spans residues 258–294 (QVYDREGEPCRTRGCKGTVKRFTQNGRSTFWCPSCQK). Arg284 acts as the Proton donor; for delta-elimination activity in catalysis.

This sequence belongs to the FPG family. Monomer. It depends on Zn(2+) as a cofactor.

The catalysed reaction is Hydrolysis of DNA containing ring-opened 7-methylguanine residues, releasing 2,6-diamino-4-hydroxy-5-(N-methyl)formamidopyrimidine.. It catalyses the reaction 2'-deoxyribonucleotide-(2'-deoxyribose 5'-phosphate)-2'-deoxyribonucleotide-DNA = a 3'-end 2'-deoxyribonucleotide-(2,3-dehydro-2,3-deoxyribose 5'-phosphate)-DNA + a 5'-end 5'-phospho-2'-deoxyribonucleoside-DNA + H(+). In terms of biological role, involved in base excision repair of DNA damaged by oxidation or by mutagenic agents. Acts as a DNA glycosylase that recognizes and removes damaged bases. Has a preference for oxidized purines, such as 7,8-dihydro-8-oxoguanine (8-oxoG). Has AP (apurinic/apyrimidinic) lyase activity and introduces nicks in the DNA strand. Cleaves the DNA backbone by beta-delta elimination to generate a single-strand break at the site of the removed base with both 3'- and 5'-phosphates. In Afipia carboxidovorans (strain ATCC 49405 / DSM 1227 / KCTC 32145 / OM5) (Oligotropha carboxidovorans), this protein is Formamidopyrimidine-DNA glycosylase.